Here is a 299-residue protein sequence, read N- to C-terminus: ATP phosphoribosyltransferase (299 aa).

The protein belongs to the ATP phosphoribosyltransferase family. Long subfamily. As to quaternary structure, equilibrium between an active dimeric form, an inactive hexameric form and higher aggregates. Interconversion between the various forms is largely reversible and is influenced by the natural substrates and inhibitors of the enzyme. Requires Mg(2+) as cofactor.

The protein localises to the cytoplasm. It catalyses the reaction 1-(5-phospho-beta-D-ribosyl)-ATP + diphosphate = 5-phospho-alpha-D-ribose 1-diphosphate + ATP. It participates in amino-acid biosynthesis; L-histidine biosynthesis; L-histidine from 5-phospho-alpha-D-ribose 1-diphosphate: step 1/9. Feedback inhibited by histidine. Catalyzes the condensation of ATP and 5-phosphoribose 1-diphosphate to form N'-(5'-phosphoribosyl)-ATP (PR-ATP). Has a crucial role in the pathway because the rate of histidine biosynthesis seems to be controlled primarily by regulation of HisG enzymatic activity. The polypeptide is ATP phosphoribosyltransferase (hisG) (Buchnera aphidicola subsp. Schizaphis graminum (strain Sg)).